We begin with the raw amino-acid sequence, 107 residues long: Urease subunit beta (107 aa).

Belongs to the urease beta subunit family. As to quaternary structure, heterotrimer of UreA (gamma), UreB (beta) and UreC (alpha) subunits. Three heterotrimers associate to form the active enzyme.

Its subcellular location is the cytoplasm. The catalysed reaction is urea + 2 H2O + H(+) = hydrogencarbonate + 2 NH4(+). The protein operates within nitrogen metabolism; urea degradation; CO(2) and NH(3) from urea (urease route): step 1/1. This is Urease subunit beta from Teredinibacter turnerae (strain ATCC 39867 / T7901).